Here is a 362-residue protein sequence, read N- to C-terminus: Phospho-N-acetylmuramoyl-pentapeptide-transferase (362 aa).

A run of 10 helical transmembrane segments spans residues 28–48 (AACM…IRWL), 72–92 (GTPT…TLLW), 100–120 (VWAV…DDYL), 134–154 (VKLI…MSLT), 170–190 (VLIP…MGAS), 201–221 (GLAI…AYLV), 241–261 (LTVF…FNAP), 265–285 (VFMG…VAIA), 290–310 (IVLA…IVQV), and 339–359 (TIVI…LATL).

It belongs to the glycosyltransferase 4 family. MraY subfamily. Mg(2+) is required as a cofactor.

The protein localises to the cell inner membrane. It carries out the reaction UDP-N-acetyl-alpha-D-muramoyl-L-alanyl-gamma-D-glutamyl-meso-2,6-diaminopimeloyl-D-alanyl-D-alanine + di-trans,octa-cis-undecaprenyl phosphate = di-trans,octa-cis-undecaprenyl diphospho-N-acetyl-alpha-D-muramoyl-L-alanyl-D-glutamyl-meso-2,6-diaminopimeloyl-D-alanyl-D-alanine + UMP. The protein operates within cell wall biogenesis; peptidoglycan biosynthesis. Functionally, catalyzes the initial step of the lipid cycle reactions in the biosynthesis of the cell wall peptidoglycan: transfers peptidoglycan precursor phospho-MurNAc-pentapeptide from UDP-MurNAc-pentapeptide onto the lipid carrier undecaprenyl phosphate, yielding undecaprenyl-pyrophosphoryl-MurNAc-pentapeptide, known as lipid I. The protein is Phospho-N-acetylmuramoyl-pentapeptide-transferase of Granulibacter bethesdensis (strain ATCC BAA-1260 / CGDNIH1).